The sequence spans 241 residues: Proteasome subunit alpha (241 aa).

It belongs to the peptidase T1A family. In terms of assembly, the 20S proteasome core is composed of 14 alpha and 14 beta subunits that assemble into four stacked heptameric rings, resulting in a barrel-shaped structure. The two inner rings, each composed of seven catalytic beta subunits, are sandwiched by two outer rings, each composed of seven alpha subunits. The catalytic chamber with the active sites is on the inside of the barrel. Has a gated structure, the ends of the cylinder being occluded by the N-termini of the alpha-subunits. Is capped at one or both ends by the proteasome regulatory ATPase, PAN.

The protein localises to the cytoplasm. Its activity is regulated as follows. The formation of the proteasomal ATPase PAN-20S proteasome complex, via the docking of the C-termini of PAN into the intersubunit pockets in the alpha-rings, triggers opening of the gate for substrate entry. Interconversion between the open-gate and close-gate conformations leads to a dynamic regulation of the 20S proteasome proteolysis activity. In terms of biological role, component of the proteasome core, a large protease complex with broad specificity involved in protein degradation. The polypeptide is Proteasome subunit alpha (Methanosphaerula palustris (strain ATCC BAA-1556 / DSM 19958 / E1-9c)).